The following is a 350-amino-acid chain: Aminomethyltransferase (350 aa).

The protein belongs to the GcvT family. The glycine cleavage system is composed of four proteins: P, T, L and H.

The enzyme catalyses N(6)-[(R)-S(8)-aminomethyldihydrolipoyl]-L-lysyl-[protein] + (6S)-5,6,7,8-tetrahydrofolate = N(6)-[(R)-dihydrolipoyl]-L-lysyl-[protein] + (6R)-5,10-methylene-5,6,7,8-tetrahydrofolate + NH4(+). Functionally, the glycine cleavage system catalyzes the degradation of glycine. This is Aminomethyltransferase from Aquifex aeolicus (strain VF5).